The chain runs to 98 residues: HssA/B-like protein 34 (98 aa).

2 disordered regions span residues 1 to 26 (MTLF…SFGS) and 60 to 98 (AKSS…SCSC). Residues 60-72 (AKSSGGSCGGKGG) are compositionally biased toward gly residues. Residues 73-88 (SHNHGHGHGHGPHGHG) are compositionally biased toward basic residues. Residues 89–98 (GKGSGGSCSC) show a composition bias toward gly residues.

It belongs to the hssA/B family.

The protein is HssA/B-like protein 34 (hssl34) of Dictyostelium discoideum (Social amoeba).